A 126-amino-acid polypeptide reads, in one-letter code: Protein ApaG (126 aa).

Residues 2–126 (SQLTSSVRVD…FRLSIPGLLH (125 aa)) enclose the ApaG domain.

This is Protein ApaG from Shewanella halifaxensis (strain HAW-EB4).